Consider the following 436-residue polypeptide: Adenylosuccinate synthetase (436 aa).

GTP contacts are provided by residues 12-18 (GDEGKGK) and 40-42 (GHT). D13 (proton acceptor) is an active-site residue. Positions 13 and 40 each coordinate Mg(2+). IMP contacts are provided by residues 13–16 (DEGK), 38–41 (NAGH), T128, R142, Q223, T238, and R302. The Proton donor role is filled by H41. 298-304 (TTTGRRR) provides a ligand contact to substrate. GTP-binding positions include R304, 330–332 (KLD), and 412–414 (SLG).

Belongs to the adenylosuccinate synthetase family. As to quaternary structure, homodimer. The cofactor is Mg(2+).

The protein localises to the cytoplasm. It catalyses the reaction IMP + L-aspartate + GTP = N(6)-(1,2-dicarboxyethyl)-AMP + GDP + phosphate + 2 H(+). Its pathway is purine metabolism; AMP biosynthesis via de novo pathway; AMP from IMP: step 1/2. Plays an important role in the de novo pathway of purine nucleotide biosynthesis. Catalyzes the first committed step in the biosynthesis of AMP from IMP. The sequence is that of Adenylosuccinate synthetase from Prochlorococcus marinus (strain MIT 9215).